Here is a 158-residue protein sequence, read N- to C-terminus: Transcription elongation factor GreA (158 aa).

Residues 45-72 (AEYHAAREQQSFIEGRIKQLEGELSHAE) adopt a coiled-coil conformation.

This sequence belongs to the GreA/GreB family.

Necessary for efficient RNA polymerase transcription elongation past template-encoded arresting sites. The arresting sites in DNA have the property of trapping a certain fraction of elongating RNA polymerases that pass through, resulting in locked ternary complexes. Cleavage of the nascent transcript by cleavage factors such as GreA or GreB allows the resumption of elongation from the new 3'terminus. GreA releases sequences of 2 to 3 nucleotides. In Xylella fastidiosa (strain M23), this protein is Transcription elongation factor GreA.